Reading from the N-terminus, the 345-residue chain is 3-isopropylmalate dehydrogenase (345 aa).

76-87 is a binding site for NAD(+); sequence GPKYDNAPVRPE. The substrate site is built by Arg94, Arg104, Arg132, and Asp216. Mg(2+)-binding residues include Asp216, Asp240, and Asp244. 274 to 286 lines the NAD(+) pocket; the sequence is GSAPDIAGQGIAN.

This sequence belongs to the isocitrate and isopropylmalate dehydrogenases family. LeuB type 1 subfamily. In terms of assembly, homodimer. The cofactor is Mg(2+). Requires Mn(2+) as cofactor.

It is found in the cytoplasm. It catalyses the reaction (2R,3S)-3-isopropylmalate + NAD(+) = 4-methyl-2-oxopentanoate + CO2 + NADH. The protein operates within amino-acid biosynthesis; L-leucine biosynthesis; L-leucine from 3-methyl-2-oxobutanoate: step 3/4. Catalyzes the oxidation of 3-carboxy-2-hydroxy-4-methylpentanoate (3-isopropylmalate) to 3-carboxy-4-methyl-2-oxopentanoate. The product decarboxylates to 4-methyl-2 oxopentanoate. This is 3-isopropylmalate dehydrogenase from Streptococcus thermophilus (strain CNRZ 1066).